The primary structure comprises 648 residues: Proton myo-inositol cotransporter (648 aa).

Residues 1–76 (MSRKASENVE…AARRQFQQDE (76 aa)) are Cytoplasmic-facing. 3 positions are modified to phosphoserine: S6, S47, and S50. Residues 77–97 (TPAFVYVVAVFSALGGFLFGY) form a helical membrane-spanning segment. The Extracellular portion of the chain corresponds to 98-125 (DTGVVSGAMLLLKRQLSLDALWQELLVS). Residues 126–146 (STVGAAAVSALAGGALNGVFG) form a helical membrane-spanning segment. Residues 147 to 148 (RR) lie on the Cytoplasmic side of the membrane. A helical membrane pass occupies residues 149–169 (AAILLASALFTAGSAVLAAAN). Over 170 to 178 (NKETLLAGR) the chain is Extracellular. A helical transmembrane segment spans residues 179 to 199 (LVVGLGIGIASMTVPVYIAEV). Topologically, residues 200 to 212 (SPPNLRGRLVTIN) are cytoplasmic. The chain crosses the membrane as a helical span at residues 213–233 (TLFITGGQFFASVVDGAFSYL). Residues 234–239 (QKDGWR) lie on the Extracellular side of the membrane. A helical transmembrane segment spans residues 240–260 (YMLGLAAVPAVIQFFGFLFLP). Residues 261-324 (ESPRWLIQKG…RMLSYPPTRR (64 aa)) lie on the Cytoplasmic side of the membrane. Residues 325–345 (ALIVGCGLQMFQQLSGINTIM) traverse the membrane as a helical segment. Residues 346 to 363 (YYSATILQMSGVEDDRLA) are Extracellular-facing. The chain crosses the membrane as a helical span at residues 364-384 (IWLASVTAFTNFIFTLVGVWL). Residues 385–393 (VEKVGRRKL) lie on the Cytoplasmic side of the membrane. A helical transmembrane segment spans residues 394–414 (TFGSLAGTTVALIILALGFVL). The Extracellular segment spans residues 415-508 (SAQVSPRITF…NFCPTPYSWT (94 aa)). N-linked (GlcNAc...) asparagine glycosylation is found at N433, N458, and N485. The chain crosses the membrane as a helical span at residues 509–529 (ALLGLILYLVFFAPGMGPMPW). The Cytoplasmic segment spans residues 530–549 (TVNSEIYPLWARSTGNACSS). A helical transmembrane segment spans residues 550-570 (GINWIFNVLVSLTFLHTAEYL). Over 571 to 573 (TYY) the chain is Extracellular. The chain crosses the membrane as a helical span at residues 574–594 (GAFFLYAGFAAVGLLFIYGCL). Topologically, residues 595–648 (PETKGKKLEEIESLFDNRLCTCGTSDSDEGRYIEYIRVKGSNYHLSDNDASDVE) are cytoplasmic. S640 and S645 each carry phosphoserine.

Belongs to the major facilitator superfamily. Sugar transporter (TC 2.A.1.1) family. In terms of processing, glycosylated. Predominantly expressed in the brain.

Its subcellular location is the cell membrane. The enzyme catalyses myo-inositol(out) + H(+)(out) = myo-inositol(in) + H(+)(in). Functionally, h(+)-myo-inositol cotransporter. Can also transport related stereoisomers. In Homo sapiens (Human), this protein is Proton myo-inositol cotransporter.